The chain runs to 118 residues: Large ribosomal subunit protein bL19 (118 aa).

It belongs to the bacterial ribosomal protein bL19 family.

Its function is as follows. This protein is located at the 30S-50S ribosomal subunit interface and may play a role in the structure and function of the aminoacyl-tRNA binding site. This is Large ribosomal subunit protein bL19 from Campylobacter hominis (strain ATCC BAA-381 / DSM 21671 / CCUG 45161 / LMG 19568 / NCTC 13146 / CH001A).